A 349-amino-acid chain; its full sequence is MTEFDNLTWLHGKPQGSGLLKANPEDFVVVEDLGFTPDGEGEHILLRILKNGCNTRFVADALAKFLKIHAREVSFAGQKDKHAVTEQWLCARVPGKEMPDFSAFQLEGCKVLEYARHKRKLRLGALKGNAFTLVLREISDRRDVETRLQAIRDGGVPNYFGAQRFGIGGSNLQGALHWAQSNAPVRDRNKRSFWLSAARSALFNQIVHQRLKKPDFNQVVDGDALQLAGRGSWFVATSEELPELQRRVDEKELMITASLPGSGEWGTQRAALAFEQDAIAQETVLQSLLLREKVEASRRAMLLYPQQLSWNWWDDVTVELRFWLPAGSFATSVVRELINTMGDYAHIAE.

A substrate-binding site is contributed by F27. D80 acts as the Nucleophile in catalysis. Position 129 (N129) interacts with substrate. A TRUD domain is found at 155-303 (GVPNYFGAQR…VEASRRAMLL (149 aa)). F329 provides a ligand contact to substrate.

The protein belongs to the pseudouridine synthase TruD family.

The catalysed reaction is uridine(13) in tRNA = pseudouridine(13) in tRNA. Its function is as follows. Responsible for synthesis of pseudouridine from uracil-13 in transfer RNAs. This is tRNA pseudouridine synthase D from Salmonella newport (strain SL254).